A 400-amino-acid polypeptide reads, in one-letter code: Argininosuccinate synthase (400 aa).

ATP is bound by residues alanine 11–serine 19 and alanine 38. The L-citrulline site is built by tyrosine 89 and serine 94. Glycine 119 is an ATP binding site. Positions 121, 125, and 126 each coordinate L-aspartate. Asparagine 125 is a binding site for L-citrulline. Residues arginine 129, serine 178, serine 187, glutamate 263, and tyrosine 275 each coordinate L-citrulline.

This sequence belongs to the argininosuccinate synthase family. Type 1 subfamily. In terms of assembly, homotetramer.

It localises to the cytoplasm. The enzyme catalyses L-citrulline + L-aspartate + ATP = 2-(N(omega)-L-arginino)succinate + AMP + diphosphate + H(+). It functions in the pathway amino-acid biosynthesis; L-arginine biosynthesis; L-arginine from L-ornithine and carbamoyl phosphate: step 2/3. This Desulfatibacillum aliphaticivorans protein is Argininosuccinate synthase.